The following is a 320-amino-acid chain: Malate dehydrogenase (320 aa).

NAD(+) is bound by residues 10 to 15 (GSGMIG) and Asp-34. Substrate contacts are provided by Arg-83 and Arg-89. NAD(+)-binding positions include Asn-96 and 119-121 (ITN). 2 residues coordinate substrate: Asn-121 and Arg-152. His-176 acts as the Proton acceptor in catalysis.

This sequence belongs to the LDH/MDH superfamily. MDH type 3 family.

It carries out the reaction (S)-malate + NAD(+) = oxaloacetate + NADH + H(+). In terms of biological role, catalyzes the reversible oxidation of malate to oxaloacetate. The sequence is that of Malate dehydrogenase from Maricaulis maris (strain MCS10) (Caulobacter maris).